The sequence spans 1434 residues: Pleiotropic drug resistance protein 1 (1434 aa).

The segment at 1–22 is disordered; sequence MEPANLSNLRGSSLRGSTRGSL. The ABC transporter 1 domain maps to 161–434; that stretch reads LNSLHILSSR…FESMGFKCPQ (274 aa). 194–201 contributes to the ATP binding site; that stretch reads GPPSSGKT. The ABC transmembrane type-2 1 domain maps to 512–725; the sequence is ELLKVCTERE…SVNSILVNEF (214 aa). The next 7 membrane-spanning stretches (helical) occupy residues 530-550, 563-583, 618-638, 649-669, 675-695, 702-722, and 760-780; these read FVYM…MTLF, GGIY…NGMS, IPVT…VIGF, FLLL…IGAV, VAST…GFVL, SWWI…SILV, and IGVG…SLAL. The disordered stretch occupies residues 793–824; sequence LPEDGENAENGEVSSQITSTDGGDSISESQNN. Residues 804–824 are compositionally biased toward polar residues; it reads EVSSQITSTDGGDSISESQNN. The region spanning 837–1089 is the ABC transporter 2 domain; it reads ITFDDVVYSV…HLIKYFESNP (253 aa). 882-889 serves as a coordination point for ATP; sequence GVSGAGKT. One can recognise an ABC transmembrane type-2 2 domain in the interval 1162–1376; that stretch reads TQCVACLWKQ…TLYGLVASQF (215 aa). The next 7 helical transmembrane spans lie at 1181-1201, 1221-1241, 1269-1289, 1296-1316, 1326-1346, 1357-1377, and 1406-1426; these read YTAV…TMFW, YAAV…VVAI, IPYI…MIGF, FFWY…YGMM, VASI…GFII, WYYW…SQFG, and VVAA…AFAI.

Belongs to the ABC transporter superfamily. ABCG family. PDR (TC 3.A.1.205) subfamily.

The protein resides in the membrane. May be a general defense protein. The polypeptide is Pleiotropic drug resistance protein 1 (PDR1) (Nicotiana tabacum (Common tobacco)).